Here is a 654-residue protein sequence, read N- to C-terminus: Acetyl-coenzyme A synthetase (654 aa).

Residues 193–196 and threonine 313 contribute to the CoA site; that span reads RRGK. ATP-binding positions include 389 to 391, 413 to 418, aspartate 506, and arginine 521; these read GEP and DTWWQT. Serine 529 is a CoA binding site. Arginine 532 provides a ligand contact to ATP. Mg(2+)-binding residues include histidine 545 and valine 548. Lysine 619 carries the N6-acetyllysine modification.

The protein belongs to the ATP-dependent AMP-binding enzyme family. Requires Mg(2+) as cofactor. Acetylated. Deacetylation by the SIR2-homolog deacetylase activates the enzyme.

The catalysed reaction is acetate + ATP + CoA = acetyl-CoA + AMP + diphosphate. Catalyzes the conversion of acetate into acetyl-CoA (AcCoA), an essential intermediate at the junction of anabolic and catabolic pathways. AcsA undergoes a two-step reaction. In the first half reaction, AcsA combines acetate with ATP to form acetyl-adenylate (AcAMP) intermediate. In the second half reaction, it can then transfer the acetyl group from AcAMP to the sulfhydryl group of CoA, forming the product AcCoA. The polypeptide is Acetyl-coenzyme A synthetase (Wolinella succinogenes (strain ATCC 29543 / DSM 1740 / CCUG 13145 / JCM 31913 / LMG 7466 / NCTC 11488 / FDC 602W) (Vibrio succinogenes)).